A 30-amino-acid polypeptide reads, in one-letter code: Rothein 3.4 (30 aa).

Leucine 30 carries the post-translational modification Leucine amide.

The protein belongs to the frog skin active peptide (FSAP) family. Rothein subfamily. Expressed by the skin dorsal glands.

Its subcellular location is the secreted. Lacks antimicrobial activity. Does not inhibit the formation of NO by neuronal nitric oxide. This chain is Rothein 3.4, found in Litoria rothii (Roth's tree frog).